The following is a 24-amino-acid chain: Humanin (24 aa).

Residues 1–12 (MAPRGFSCLLLL) are sufficient to interact with BID and BIM and to suppress BID and BIM activity. A sufficient for neuroprotective activity region spans residues 3-19 (PRGFSCLLLLTSEIDLP). A sufficient to interact with MPP8 region spans residues 5-12 (GFSCLLLL). Required for secretion regions lie at residues 9–11 (LLL) and 19–20 (PV).

As to quaternary structure, homodimer. Interacts with amyloid-beta protein 42 (Abeta42); the interaction prevents Abeta42 fibril formation. Interacts with BAX; forms fibers with BAX which results in BAX conformational changes and sequestering of BAX into the fibers, preventing BAX activation. Interacts with both full-length BID and cleaved BID p15; forms fibers with BID which results in BID conformational changes and sequestering of BID into the fibers, preventing BID activation. Interacts with BIM isoform BimEL but not with BIM isoforms BimL or BimS; the interaction prevents BIM-induced apoptosis. Interacts with IGFBP3; competes with importin KPNB1 for binding to IGFBP3, blocking IGFBP3 nuclear import. Interacts with TRIM11. Interacts with MPP8. In terms of tissue distribution, expressed in testis, seminal plasma and sperm (at protein level). Higher seminal plasma levels are associated with normospermia than with oligospermia, asthenospermia or oligoasthenospermia (at protein level). Higher sperm levels are associated with normospermia than with asthenospermia (at protein level). Expressed in retinal epithelial cells (at protein level). Expressed in the heart, skeletal muscle, kidney and liver. Lesser but significant expression is observed in the brain and the gastrointestinal tract. Expressed in the AD brain, where it is found in some of the large intact neurons of the occipital lobes and small and round reactive glial cells in the hippocampus.

The protein resides in the secreted. Its subcellular location is the cytoplasm. It localises to the cell projection. The protein localises to the cilium. It is found in the flagellum. The protein resides in the nucleus. Its subcellular location is the mitochondrion. In terms of biological role, plays a role as a neuroprotective factor. Protects against neuronal cell death induced by multiple different familial Alzheimer disease genes and amyloid-beta proteins in Alzheimer disease. Mediates its neuroprotective effect by interacting with a receptor complex composed of IL6ST/GP130, IL27RA/WSX1 and CNTFR. Also acts as a ligand for G-protein coupled receptors FPR2/FPRL1 and FPR3/FPRL2. Inhibits amyloid-beta protein 40 fibril formation. Also inhibits amyloid-beta protein 42 fibril formation. Suppresses apoptosis by binding to BAX and preventing the translocation of BAX from the cytosol to mitochondria. Also suppresses apoptosis by binding to BID and inhibiting the interaction of BID with BAX and BAK which prevents oligomerization of BAX and BAK and suppresses release of apoptogenic proteins from mitochondria. Forms fibers with BAX and also with BID, inducing BAX and BID conformational changes and sequestering them into the fibers which prevents their activation. Can also suppress apoptosis by interacting with BIM isoform BimEL, inhibiting BimEL-induced activation of BAX, blocking oligomerization of BAX and BAK, and preventing release of apoptogenic proteins from mitochondria. Plays a role in up-regulation of anti-apoptotic protein BIRC6/APOLLON, leading to inhibition of neuronal cell death. Binds to IGFBP3 and specifically blocks IGFBP3-induced cell death. Competes with importin KPNB1 for binding to IGFBP3 which is likely to block IGFBP3 nuclear import. Induces chemotaxis of mononuclear phagocytes via FPR2/FPRL1. Reduces aggregation and fibrillary formation by suppressing the effect of APP on mononuclear phagocytes and acts by competitively inhibiting the access of FPR2 to APP. Protects retinal pigment epithelium (RPE) cells against oxidative stress-induced and endoplasmic reticulum (ER) stress-induced apoptosis. Promotes mitochondrial biogenesis in RPE cells following oxidative stress and promotes STAT3 phosphorylation which leads to inhibition of CASP3 release. Also reduces CASP4 levels in RPE cells, suppresses ER stress-induced mitochondrial superoxide production and plays a role in up-regulation of mitochondrial glutathione. Reduces testicular hormone deprivation-induced apoptosis of germ cells at the nonandrogen-sensitive stages of the seminiferous epithelium cycle. Protects endothelial cells against free fatty acid-induced inflammation by suppressing oxidative stress, reducing expression of TXNIP and inhibiting activation of the NLRP3 inflammasome which inhibits expression of pro-inflammatory cytokines IL1B and IL18. Protects against high glucose-induced endothelial cell dysfunction by mediating activation of ERK5 which leads to increased expression of transcription factor KLF2 and prevents monocyte adhesion to endothelial cells. Inhibits the inflammatory response in astrocytes. Increases the expression of PPARGC1A/PGC1A in pancreatic beta cells which promotes mitochondrial biogenesis. Increases insulin sensitivity. This Homo sapiens (Human) protein is Humanin.